The following is a 166-amino-acid chain: Regulatory protein RecX (166 aa).

The protein belongs to the RecX family.

It localises to the cytoplasm. Modulates RecA activity. This chain is Regulatory protein RecX, found in Escherichia coli (strain SE11).